Consider the following 442-residue polypeptide: QWRF motif-containing protein 6 (442 aa).

Disordered stretches follow at residues 1 to 144 (MEAK…LSQQ) and 221 to 240 (FSRLGLPLPPMAPKVPADTK). Over residues 57–66 (KQHHLQHHQI) the composition is skewed to basic residues. Residues 80–89 (KMADGDENRS) show a composition bias toward basic and acidic residues. A QWRF motif motif is present at residues 264 to 267 (QWRF).

It belongs to the QWRF family.

This Arabidopsis thaliana (Mouse-ear cress) protein is QWRF motif-containing protein 6 (QWRF6).